The sequence spans 130 residues: 3-aminoacrylate deaminase RutC (130 aa).

The protein belongs to the RutC family.

The enzyme catalyses (Z)-3-aminoacrylate + H2O + H(+) = 3-oxopropanoate + NH4(+). In terms of biological role, involved in pyrimidine catabolism. Catalyzes the deamination of 3-aminoacrylate to malonic semialdehyde, a reaction that can also occur spontaneously. RutC may facilitate the reaction and modulate the metabolic fitness, rather than catalyzing essential functions. The polypeptide is 3-aminoacrylate deaminase RutC (Methylorubrum extorquens (strain CM4 / NCIMB 13688) (Methylobacterium extorquens)).